A 127-amino-acid chain; its full sequence is Transcription antitermination protein NusB (127 aa).

This sequence belongs to the NusB family.

Functionally, involved in transcription antitermination. Required for transcription of ribosomal RNA (rRNA) genes. Binds specifically to the boxA antiterminator sequence of the ribosomal RNA (rrn) operons. This chain is Transcription antitermination protein NusB, found in Lysinibacillus sphaericus (strain C3-41).